We begin with the raw amino-acid sequence, 395 residues long: Beta-1,4-galactosyltransferase 3 (395 aa).

The Cytoplasmic portion of the chain corresponds to 1–10 (MLRRLLERPC). Residues 11-31 (TLALLVGSQLAVMMYLSLGGF) traverse the membrane as a helical; Signal-anchor for type II membrane protein segment. Residues 32–395 (RSLSALFGRD…ANHTAPRGSH (364 aa)) lie on the Lumenal side of the membrane. N-linked (GlcNAc...) asparagine glycosylation occurs at N57. C79 and C121 form a disulfide bridge. Position 132-136 (132-136 (PHRAR)) interacts with UDP-alpha-D-galactose. A glycan (N-linked (GlcNAc...) asparagine) is linked at N168. UDP-alpha-D-galactose contacts are provided by residues 171–173 (FNR), 198–199 (VD), Y228, and W260. An intrachain disulfide couples C192 to C211. D199 is a Mn(2+) binding site. 262-265 (GEDD) is a binding site for N-acetyl-D-glucosamine. H293 contributes to the Mn(2+) binding site. Residue 293–295 (HRG) participates in UDP-alpha-D-galactose binding. R305 provides a ligand contact to N-acetyl-D-glucosamine. N-linked (GlcNAc...) asparagine glycosylation is present at N339. The disordered stretch occupies residues 340–395 (ITADIGTDPRGPRSPSGPRYPPGSSQAFRQEMLQRRPPARPGPLPTANHTAPRGSH). The span at 352–364 (RSPSGPRYPPGSS) shows a compositional bias: low complexity. The N-linked (GlcNAc...) asparagine glycan is linked to N387.

The protein belongs to the glycosyltransferase 7 family. Mn(2+) is required as a cofactor.

The protein resides in the golgi apparatus. It is found in the golgi stack membrane. It catalyses the reaction an N-acetyl-beta-D-glucosaminyl derivative + UDP-alpha-D-galactose = a beta-D-galactosyl-(1-&gt;4)-N-acetyl-beta-D-glucosaminyl derivative + UDP + H(+). It carries out the reaction N-acetyl-D-glucosamine + UDP-alpha-D-galactose = beta-D-galactosyl-(1-&gt;4)-N-acetyl-D-glucosamine + UDP + H(+). The catalysed reaction is a beta-D-GlcNAc-(1-&gt;3)-beta-D-Gal-(1-&gt;4)-beta-D-Glc-(1&lt;-&gt;1)-Cer(d18:1(4E)) + UDP-alpha-D-galactose = a neolactoside nLc4Cer(d18:1(4E)) + UDP + H(+). The enzyme catalyses a beta-D-glucosylceramide + UDP-alpha-D-galactose = a beta-D-galactosyl-(1-&gt;4)-beta-D-glucosyl-(1&lt;-&gt;1)-ceramide + UDP + H(+). It catalyses the reaction a neolactoside IV(3)-beta-GlcNAc-nLc4Cer + UDP-alpha-D-galactose = a neolactoside nLc6Cer + UDP + H(+). It participates in protein modification; protein glycosylation. In terms of biological role, responsible for the synthesis of complex-type N-linked oligosaccharides in many glycoproteins as well as the carbohydrate moieties of glycolipids. In Mus musculus (Mouse), this protein is Beta-1,4-galactosyltransferase 3.